The chain runs to 88 residues: Putative regulatory protein Ava_1474 (88 aa).

Belongs to the RemA family.

This chain is Putative regulatory protein Ava_1474, found in Trichormus variabilis (strain ATCC 29413 / PCC 7937) (Anabaena variabilis).